The primary structure comprises 160 residues: 2-C-methyl-D-erythritol 2,4-cyclodiphosphate synthase (160 aa).

The a divalent metal cation site is built by Asp-10 and His-12. 4-CDP-2-C-methyl-D-erythritol 2-phosphate is bound by residues 10–12 (DVH) and 36–37 (HS). Residue His-44 participates in a divalent metal cation binding. Residues 58–60 (DIG), 63–67 (FPDTD), and Arg-144 contribute to the 4-CDP-2-C-methyl-D-erythritol 2-phosphate site.

This sequence belongs to the IspF family. Homotrimer. It depends on a divalent metal cation as a cofactor.

It carries out the reaction 4-CDP-2-C-methyl-D-erythritol 2-phosphate = 2-C-methyl-D-erythritol 2,4-cyclic diphosphate + CMP. Its pathway is isoprenoid biosynthesis; isopentenyl diphosphate biosynthesis via DXP pathway; isopentenyl diphosphate from 1-deoxy-D-xylulose 5-phosphate: step 4/6. Functionally, involved in the biosynthesis of isopentenyl diphosphate (IPP) and dimethylallyl diphosphate (DMAPP), two major building blocks of isoprenoid compounds. Catalyzes the conversion of 4-diphosphocytidyl-2-C-methyl-D-erythritol 2-phosphate (CDP-ME2P) to 2-C-methyl-D-erythritol 2,4-cyclodiphosphate (ME-CPP) with a corresponding release of cytidine 5-monophosphate (CMP). This Dechloromonas aromatica (strain RCB) protein is 2-C-methyl-D-erythritol 2,4-cyclodiphosphate synthase.